A 308-amino-acid chain; its full sequence is MVRKNKINRASGTTKHLKDFPSVILSLPSYNPSILSKNATALITGGSSGLGFELAKELSRRINKVIVADIQSFPTFAQVEYNNIFYYQCDITSLDEIKNLKKAIERDHGNINIIINNAGVAHIKKLEHMTNKEVEQLIDINLIGAYRIISTFAEDMIDNREGFIINIASVLGELTPARLTSYGASKGAMIGFHKCMSRHFRSLSTECNKTGIKTLLVCPGKIKTNMFIDVPTPSKLLAPDIIPSQLALAIISAMEHNHLQTLNAPYYVNLVPFFKTLSWPYRHLLKHFSGMDHVTSTSPRAINPKRSA.

NADP(+)-binding residues include L50, D90, N117, Y182, K186, I222, and T224. Y182 serves as the catalytic Proton acceptor. K186 serves as the catalytic Lowers pKa of active site Tyr.

The protein belongs to the short-chain dehydrogenases/reductases (SDR) family.

This is an uncharacterized protein from Saccharomyces cerevisiae (strain ATCC 204508 / S288c) (Baker's yeast).